The following is a 194-amino-acid chain: Orotate phosphoribosyltransferase (194 aa).

Residues Arg102, Lys103, Lys106, His108, and 129–137 (EDVVTTGGS) each bind 5-phospho-alpha-D-ribose 1-diphosphate. Residues Thr133 and Arg161 each coordinate orotate.

The protein belongs to the purine/pyrimidine phosphoribosyltransferase family. PyrE subfamily. In terms of assembly, homodimer. Mg(2+) is required as a cofactor.

It catalyses the reaction orotidine 5'-phosphate + diphosphate = orotate + 5-phospho-alpha-D-ribose 1-diphosphate. It functions in the pathway pyrimidine metabolism; UMP biosynthesis via de novo pathway; UMP from orotate: step 1/2. Functionally, catalyzes the transfer of a ribosyl phosphate group from 5-phosphoribose 1-diphosphate to orotate, leading to the formation of orotidine monophosphate (OMP). The protein is Orotate phosphoribosyltransferase of Prochlorococcus marinus (strain MIT 9211).